The following is a 138-amino-acid chain: MTKSIPRIGSRRGGRIASRKNARRIPKGVIHVQASFNNTIVTVTDVTGRVVSWSSAGTCGFRGTRRGTPFAAQTAAANAIRTVIDQGMQRAEVMIKGPGLGRDAALRAIRRSGILLSFVRDVTPMPHNGCRPPKKRRV.

The interval 1–21 (MTKSIPRIGSRRGGRIASRKN) is disordered. The segment covering 9 to 21 (GSRRGGRIASRKN) has biased composition (basic residues).

The protein belongs to the universal ribosomal protein uS11 family. As to quaternary structure, part of the 30S ribosomal subunit.

It is found in the plastid. The protein localises to the chloroplast. The sequence is that of Small ribosomal subunit protein uS11c from Calycanthus floridus var. glaucus (Eastern sweetshrub).